The following is a 144-amino-acid chain: AP-4 complex subunit sigma-1 (144 aa).

It belongs to the adaptor complexes small subunit family. As to quaternary structure, adaptor protein complex 4 (AP-4) is a heterotetramer composed of two large adaptins (epsilon-type subunit AP4E1 and beta-type subunit AP4B1), a medium adaptin (mu-type subunit AP4M1) and a small adaptin (sigma-type AP4S1).

Its subcellular location is the golgi apparatus. The protein resides in the trans-Golgi network membrane. Functionally, component of the adaptor protein complex 4 (AP-4). Adaptor protein complexes are vesicle coat components involved both in vesicle formation and cargo selection. They control the vesicular transport of proteins in different trafficking pathways. AP-4 forms a non clathrin-associated coat on vesicles departing the trans-Golgi network (TGN) and may be involved in the targeting of proteins from the trans-Golgi network (TGN) to the endosomal-lysosomal system. It is also involved in protein sorting to the basolateral membrane in epithelial cells and the proper asymmetric localization of somatodendritic proteins in neurons. AP-4 is involved in the recognition and binding of tyrosine-based sorting signals found in the cytoplasmic part of cargos, but may also recognize other types of sorting signal. This Mus musculus (Mouse) protein is AP-4 complex subunit sigma-1.